We begin with the raw amino-acid sequence, 1603 residues long: Transcription factor Gibbin (1603 aa).

Disordered stretches follow at residues 19 to 108 (PDYL…SSSR), 150 to 236 (LRLS…STDY), 264 to 285 (LEPPSPEPEPQLLDPQPRFLDP), and 394 to 467 (CRRR…RKGK). A compositionally biased stretch (pro residues) spans 30-47 (GGPPTPRPLLPTRPPASP). Residue Lys-79 is modified to N6-acetyllysine. Residues 166–178 (SFFSSPSLANSIR) show a composition bias toward polar residues. A compositionally biased stretch (basic and acidic residues) spans 179 to 194 (SPEERATPHAKSERPS). The span at 216–225 (PGATAAATGL) shows a compositional bias: low complexity. Ser-268 is modified (phosphoserine). Residues 273 to 285 (PQLLDPQPRFLDP) show a composition bias toward low complexity. Residues 396–408 (RRKAGRGRKADAG) constitute a DNA-binding region (a.T hook 1). Pro residues predominate over residues 428–446 (EPPPPPPPPPPALPGPGPV). The a.T hook 2 DNA-binding region spans 544 to 556 (KRKRGRPPKNLLL). Residues 581 to 607 (MPEVKKRRRRKQKLASPQPSYAADAND) form a disordered region. The residue at position 596 (Ser-596) is a Phosphoserine. Lys-609 is covalently cross-linked (Glycyl lysine isopeptide (Lys-Gly) (interchain with G-Cter in SUMO2)). Disordered regions lie at residues 717 to 792 (LTEL…RNCG) and 806 to 827 (LESGASGRGSYYSTGAPSGQTE). Basic residues predominate over residues 737-746 (KPKRKRRSRK). Positions 816–827 (YYSTGAPSGQTE) are enriched in polar residues. Ser-829 and Ser-846 each carry phosphoserine. Residue Arg-891 is modified to Omega-N-methylarginine. Phosphoserine occurs at positions 896 and 1064. Disordered stretches follow at residues 1159 to 1198 (VSETFSESSSDSTQFNQPVGGGGFRRANSEASSSEGQSSL) and 1253 to 1286 (ASAAASGYPSKRSTGPRQPRGGRGGGACSAKKER). Composition is skewed to low complexity over residues 1160 to 1171 (SETFSESSSDST) and 1187 to 1198 (SEASSSEGQSSL). Residue Ser-1187 is modified to Phosphoserine. Residues Ser-1322, Ser-1324, and Ser-1399 each carry the phosphoserine modification. Position 1401 is a phosphothreonine (Thr-1401). Position 1403 is a phosphoserine (Ser-1403). Residue Lys-1409 forms a Glycyl lysine isopeptide (Lys-Gly) (interchain with G-Cter in SUMO2) linkage. Positions 1503–1533 (PHLASPPATPKADKEPLEMARPPGPPRGPAA) are disordered. Phosphoserine occurs at positions 1507 and 1549.

The protein resides in the nucleus. It localises to the chromosome. Transcription factor required for the proper patterning of the epidermis, which plays a key role in early epithelial morphogenesis. Directly binds promoter and enhancer regions and acts by maintaining local enhancer-promoter chromatin architecture. Interacts with many sequence-specific zinc-finger transcription factors and methyl-CpG-binding proteins to regulate the expression of mesoderm genes that wire surface ectoderm stratification. The sequence is that of Transcription factor Gibbin from Homo sapiens (Human).